A 312-amino-acid polypeptide reads, in one-letter code: DNA primase small subunit PriS (312 aa).

Catalysis depends on residues aspartate 88, aspartate 90, and aspartate 215.

The protein belongs to the eukaryotic-type primase small subunit family. As to quaternary structure, heterodimer of a small subunit (PriS) and a large subunit (PriL). The cofactor is Mg(2+). Mn(2+) is required as a cofactor.

Functionally, catalytic subunit of DNA primase, an RNA polymerase that catalyzes the synthesis of short RNA molecules used as primers for DNA polymerase during DNA replication. The small subunit contains the primase catalytic core and has DNA synthesis activity on its own. Binding to the large subunit stabilizes and modulates the activity, increasing the rate of DNA synthesis while decreasing the length of the DNA fragments, and conferring RNA synthesis capability. The DNA polymerase activity may enable DNA primase to also catalyze primer extension after primer synthesis. May also play a role in DNA repair. The protein is DNA primase small subunit PriS of Pyrobaculum arsenaticum (strain DSM 13514 / JCM 11321 / PZ6).